The primary structure comprises 481 residues: MSPQTETKTSVGFKAGVKDYKLTYYTPYYETKATDILAAFRVTPQPGVPPEEAGAAVAAESSTGTWTTVWTDGLTSLDRYKGRCYHIERVFGEKDQYIAYVAYPLDLFEEGSVTNMFTSIVGNVFGFKALRALRLEDLRIPPAYTKTFKGPPHGIQVERDKLNKYGRPLLGCTIKPKLGLSAKNYGRAVYECLRGGLDFTKDDENVNSQPFMRWRDRFLFCAEAIYKSQAETGEIKGHYLNATAGTCEEMLRRAYFAKELGVPIIMHDYLTGGFTANTSLAHFCRENGLLLHIHRAMHAVIDRQKNHGIHFRVLAKALRLSGGDHIHAGTVVGKLEGEREITLGFVDLLRDNFVEKDRSRGIYFTQDWVSLPGVLPVASGGIHVWHMPALTDIFGDDSVLQFGGGTLGHPWGNAPGAVANRVALEACVQARNEGLDLAQDGNSIIRQASNWSPELAAACEVWKEIQFNFKSVDTLDLNEIK.

A propeptide spanning residues 1-2 (MS) is cleaved from the precursor. Residue P3 is modified to N-acetylproline. An N6,N6,N6-trimethyllysine modification is found at K14. Substrate contacts are provided by N123 and T173. Residue K175 is the Proton acceptor of the active site. Residue K177 coordinates substrate. The Mg(2+) site is built by K201, D203, and E204. K201 carries the post-translational modification N6-carboxylysine. H294 serves as the catalytic Proton acceptor. Substrate-binding residues include R295, H327, and S379.

Belongs to the RuBisCO large chain family. Type I subfamily. Heterohexadecamer of 8 large chains and 8 small chains; disulfide-linked. The disulfide link is formed within the large subunit homodimers. It depends on Mg(2+) as a cofactor. The disulfide bond which can form in the large chain dimeric partners within the hexadecamer appears to be associated with oxidative stress and protein turnover.

It localises to the plastid. The catalysed reaction is 2 (2R)-3-phosphoglycerate + 2 H(+) = D-ribulose 1,5-bisphosphate + CO2 + H2O. It carries out the reaction D-ribulose 1,5-bisphosphate + O2 = 2-phosphoglycolate + (2R)-3-phosphoglycerate + 2 H(+). In terms of biological role, ruBisCO catalyzes two reactions: the carboxylation of D-ribulose 1,5-bisphosphate, the primary event in carbon dioxide fixation, as well as the oxidative fragmentation of the pentose substrate in the photorespiration process. Both reactions occur simultaneously and in competition at the same active site. The sequence is that of Ribulose bisphosphate carboxylase large chain from Cuscuta sandwichiana (Kauna'oa).